A 423-amino-acid polypeptide reads, in one-letter code: Glucose-1-phosphate adenylyltransferase (423 aa).

Residues Tyr108, Gly173, 188-189, and Ser207 contribute to the alpha-D-glucose 1-phosphate site; that span reads EK.

It belongs to the bacterial/plant glucose-1-phosphate adenylyltransferase family. As to quaternary structure, homotetramer.

It carries out the reaction alpha-D-glucose 1-phosphate + ATP + H(+) = ADP-alpha-D-glucose + diphosphate. The protein operates within glycan biosynthesis; glycogen biosynthesis. Its function is as follows. Involved in the biosynthesis of ADP-glucose, a building block required for the elongation reactions to produce glycogen. Catalyzes the reaction between ATP and alpha-D-glucose 1-phosphate (G1P) to produce pyrophosphate and ADP-Glc. This chain is Glucose-1-phosphate adenylyltransferase, found in Francisella tularensis subsp. holarctica (strain FTNF002-00 / FTA).